The following is a 193-amino-acid chain: Phosphatidylglycerophosphatase and protein-tyrosine phosphatase 1 (193 aa).

Residues 1–31 constitute a mitochondrion transit peptide; that stretch reads MAASAWLEAGLARVLFYPTLLYTVFRGRVGG. The Tyrosine-protein phosphatase domain occupies 37 to 188; that stretch reads WYHRIDHTVL…LKEFHKEIAA (152 aa). Lysine 85 carries the post-translational modification N6-succinyllysine. The active-site Phosphocysteine intermediate is the cysteine 132.

This sequence belongs to the protein-tyrosine phosphatase family. Non-receptor class dual specificity subfamily. As to quaternary structure, interacts with STYXL1; the interaction inhibits PTPMT1 catalytic activity. Expressed in liver and in pancreatic beta cells.

It is found in the mitochondrion inner membrane. The enzyme catalyses O-phospho-L-tyrosyl-[protein] + H2O = L-tyrosyl-[protein] + phosphate. The catalysed reaction is O-phospho-L-seryl-[protein] + H2O = L-seryl-[protein] + phosphate. It carries out the reaction O-phospho-L-threonyl-[protein] + H2O = L-threonyl-[protein] + phosphate. It catalyses the reaction a 1,2-diacyl-sn-glycero-3-phospho-(1'-sn-glycero-3'-phosphate) + H2O = a 1,2-diacyl-sn-glycero-3-phospho-(1'-sn-glycerol) + phosphate. The enzyme catalyses 1,2-di-(9Z-octadecenoyl)-sn-glycero-3-phospho-(1'-sn-glycerol-3'-phosphate) + H2O = 1,2-di-(9Z-octadecenoyl)-sn-glycero-3-phospho-(1'-sn-glycerol) + phosphate. The catalysed reaction is 1,2-dioctanoyl-sn-glycero-3-phospho-(1D-myo-inositol-5-phosphate) + H2O = 1,2-dioctanoyl-sn-glycero-3-phospho-(1D-myo-inositol) + phosphate. It carries out the reaction a 1-acyl-2-hexanoyl-sn-glycero-3-phospho-(1D-myo-inositol-5-phosphate) + H2O = a 1-acyl-2-hexanoyl-sn-glycero-3-phospho-(1D-myo-inositol) + phosphate. It catalyses the reaction 1,2-dibutyryl-sn-glycero-3-phospho-(1D-myo-inositol-5-phosphate) + H2O = 1,2-dibutyryl-sn-glycero-3-phospho-(1D-myo-inositol) + phosphate. The protein operates within phospholipid metabolism; phosphatidylglycerol biosynthesis; phosphatidylglycerol from CDP-diacylglycerol: step 2/2. Functionally, lipid phosphatase which dephosphorylates phosphatidylglycerophosphate (PGP) to phosphatidylglycerol (PG). PGP is an essential intermediate in the biosynthetic pathway of cardiolipin, a mitochondrial-specific phospholipid regulating the membrane integrity and activities of the organelle. Has also been shown to display phosphatase activity toward phosphoprotein substrates, specifically mediates dephosphorylation of mitochondrial proteins, thereby playing an essential role in ATP production. Has probably a preference for proteins phosphorylated on Ser and/or Thr residues compared to proteins phosphorylated on Tyr residues. Probably involved in regulation of insulin secretion in pancreatic beta cells. May prevent intrinsic apoptosis, probably by regulating mitochondrial membrane integrity. This is Phosphatidylglycerophosphatase and protein-tyrosine phosphatase 1 from Rattus norvegicus (Rat).